Reading from the N-terminus, the 156-residue chain is Large ribosomal subunit protein uL22 (156 aa).

It belongs to the universal ribosomal protein uL22 family. As to quaternary structure, part of the 50S ribosomal subunit.

Functionally, this protein binds specifically to 23S rRNA. It makes multiple contacts with different domains of the 23S rRNA in the assembled 50S subunit and ribosome. In terms of biological role, the globular domain of the protein is located near the polypeptide exit tunnel on the outside of the subunit, while an extended beta-hairpin is found that lines the wall of the exit tunnel in the center of the 70S ribosome. The sequence is that of Large ribosomal subunit protein uL22 from Sulfurisphaera tokodaii (strain DSM 16993 / JCM 10545 / NBRC 100140 / 7) (Sulfolobus tokodaii).